The following is a 412-amino-acid chain: B3 domain-containing protein Os02g0683500 (412 aa).

Residues M1–A87 are disordered. The span at T30–P65 shows a compositional bias: low complexity. Gly residues predominate over residues G73–E86. Positions F96 to R200 form a DNA-binding region, TF-B3. Residues R374 to L412 form a disordered region. Low complexity predominate over residues E387–S399. Positions S400 to L412 are enriched in basic and acidic residues.

It localises to the nucleus. This Oryza sativa subsp. japonica (Rice) protein is B3 domain-containing protein Os02g0683500.